An 88-amino-acid polypeptide reads, in one-letter code: Sec-independent protein translocase protein TatA (88 aa).

A helical membrane pass occupies residues 1–21 (MGGISIWQLLIIALIVVLLFG). The disordered stretch occupies residues 43–88 (MSSEEDKKALEDAEAAKPVQTAQTVQSAQPTQQATEKKPESNKEQA). The segment covering 46–57 (EEDKKALEDAEA) has biased composition (basic and acidic residues). The segment covering 62–76 (QTAQTVQSAQPTQQA) has biased composition (polar residues). Over residues 77–88 (TEKKPESNKEQA) the composition is skewed to basic and acidic residues.

It belongs to the TatA/E family. The Tat system comprises two distinct complexes: a TatABC complex, containing multiple copies of TatA, TatB and TatC subunits, and a separate TatA complex, containing only TatA subunits. Substrates initially bind to the TatABC complex, which probably triggers association of the separate TatA complex to form the active translocon.

The protein resides in the cell inner membrane. Its function is as follows. Part of the twin-arginine translocation (Tat) system that transports large folded proteins containing a characteristic twin-arginine motif in their signal peptide across membranes. TatA could form the protein-conducting channel of the Tat system. This Shewanella oneidensis (strain ATCC 700550 / JCM 31522 / CIP 106686 / LMG 19005 / NCIMB 14063 / MR-1) protein is Sec-independent protein translocase protein TatA.